The chain runs to 363 residues: tRNA-specific 2-thiouridylase MnmA (363 aa).

ATP contacts are provided by residues 6–13 (AMSGGVDS) and leucine 32. Cysteine 101 functions as the Nucleophile in the catalytic mechanism. The cysteines at positions 101 and 193 are disulfide-linked. Glycine 125 is an ATP binding site. The interaction with tRNA stretch occupies residues 143–145 (KDQ). The active-site Cysteine persulfide intermediate is the cysteine 193.

Belongs to the MnmA/TRMU family.

Its subcellular location is the cytoplasm. The catalysed reaction is S-sulfanyl-L-cysteinyl-[protein] + uridine(34) in tRNA + AH2 + ATP = 2-thiouridine(34) in tRNA + L-cysteinyl-[protein] + A + AMP + diphosphate + H(+). Functionally, catalyzes the 2-thiolation of uridine at the wobble position (U34) of tRNA, leading to the formation of s(2)U34. The protein is tRNA-specific 2-thiouridylase MnmA of Mycobacterium marinum (strain ATCC BAA-535 / M).